The following is a 182-amino-acid chain: Isopentenyl-diphosphate Delta-isomerase (182 aa).

2 residues coordinate Mn(2+): histidine 25 and histidine 32. A Nudix hydrolase domain is found at 30 to 164 (LLHLAFSSWL…PWAFSPWMVM (135 aa)). Cysteine 67 is a catalytic residue. Residue histidine 69 participates in Mn(2+) binding. Position 87 (glutamate 87) interacts with Mg(2+). 2 residues coordinate Mn(2+): glutamate 114 and glutamate 116. Glutamate 116 is a catalytic residue.

It belongs to the IPP isomerase type 1 family. As to quaternary structure, homodimer. Mg(2+) is required as a cofactor. Requires Mn(2+) as cofactor.

It is found in the cytoplasm. The enzyme catalyses isopentenyl diphosphate = dimethylallyl diphosphate. The protein operates within isoprenoid biosynthesis; dimethylallyl diphosphate biosynthesis; dimethylallyl diphosphate from isopentenyl diphosphate: step 1/1. In terms of biological role, catalyzes the 1,3-allylic rearrangement of the homoallylic substrate isopentenyl (IPP) to its highly electrophilic allylic isomer, dimethylallyl diphosphate (DMAPP). The polypeptide is Isopentenyl-diphosphate Delta-isomerase (Escherichia coli O9:H4 (strain HS)).